The sequence spans 148 residues: Ponticulin-like protein D (148 aa).

The first 20 residues, 1–20 (MLLNKSLLLLVAFVFAIVSA), serve as a signal peptide directing secretion. N-linked (GlcNAc...) asparagine glycosylation occurs at Asn67. The GPI-like-anchor amidated aspartate moiety is linked to residue Asp125. A propeptide spans 126-148 (SSAAATMIASFSAILIALLFALL) (removed in mature form).

The protein belongs to the ponticulin family. In terms of processing, the GPI-like-anchor contains a phosphoceramide group, rather than a phosphatidyl group.

It localises to the cell membrane. The chain is Ponticulin-like protein D (ponD) from Dictyostelium discoideum (Social amoeba).